The chain runs to 481 residues: Glutamyl-tRNA(Gln) amidotransferase subunit A (481 aa).

Residues lysine 76 and serine 151 each act as charge relay system in the active site. Serine 175 serves as the catalytic Acyl-ester intermediate.

This sequence belongs to the amidase family. GatA subfamily. As to quaternary structure, heterotrimer of A, B and C subunits.

It carries out the reaction L-glutamyl-tRNA(Gln) + L-glutamine + ATP + H2O = L-glutaminyl-tRNA(Gln) + L-glutamate + ADP + phosphate + H(+). Functionally, allows the formation of correctly charged Gln-tRNA(Gln) through the transamidation of misacylated Glu-tRNA(Gln) in organisms which lack glutaminyl-tRNA synthetase. The reaction takes place in the presence of glutamine and ATP through an activated gamma-phospho-Glu-tRNA(Gln). The chain is Glutamyl-tRNA(Gln) amidotransferase subunit A from Neisseria meningitidis serogroup C (strain 053442).